Consider the following 204-residue polypeptide: UPF0637 protein lmo1065 (204 aa).

Belongs to the UPF0637 family.

The sequence is that of UPF0637 protein lmo1065 from Listeria monocytogenes serovar 1/2a (strain ATCC BAA-679 / EGD-e).